The primary structure comprises 530 residues: uncharacterized protein (530 aa).

Residues 485-529 (SKEENREIKLSIRENKEKQRKKSVEKSVSKLQNQLNRLLNKNTIE) are a coiled coil.

This is an uncharacterized protein from Acanthamoeba polyphaga (Amoeba).